A 101-amino-acid chain; its full sequence is Protein Tat (101 aa).

Residues 1–24 are interaction with human CREBBP; that stretch reads MEPIDPNLEPWNHPGSQPKTACNN. The segment at 1 to 48 is transactivation; that stretch reads MEPIDPNLEPWNHPGSQPKTACNNCYCKQCCYHCQLCFTKKGLGISYG. The Zn(2+) site is built by cysteine 22, cysteine 25, and cysteine 27. The tract at residues 22–37 is cysteine-rich; sequence CNNCYCKQCCYHCQLC. Lysine 28 is modified (N6-acetyllysine; by host PCAF). 4 residues coordinate Zn(2+): cysteine 30, histidine 33, cysteine 34, and cysteine 37. Positions 38–48 are core; it reads FTKKGLGISYG. Residues 48–101 form a disordered region; the sequence is GRRKRKQRRRTSESSQNHQDPVPKQPLSQPGGIETGQKKSKKEVESQTTSDQFA. The Nuclear localization signal, RNA-binding (TAR), and protein transduction signature appears at 49–57; it reads RRKRKQRRR. An interaction with the host capping enzyme RNGTT region spans residues 49-86; it reads RRKRKQRRRTSESSQNHQDPVPKQPLSQPGGIETGQKK. Lysine 51 carries the post-translational modification N6-acetyllysine; by host EP300 and GCN5L2. At arginine 52 the chain carries Asymmetric dimethylarginine; by host PRMT6. A Glycyl lysine isopeptide (Lys-Gly) (interchain with G-Cter in ubiquitin) cross-link involves residue lysine 71.

This sequence belongs to the lentiviruses Tat family. As to quaternary structure, interacts with host CCNT1. Associates with the P-TEFb complex composed at least of Tat, P-TEFb (CDK9 and CCNT1), TAR RNA, RNA Pol II. Recruits the HATs CREBBP, TAF1/TFIID, EP300, PCAF and GCN5L2. Interacts with host KAT5/Tip60; this interaction targets the latter to degradation. Interacts with the host deacetylase SIRT1. Interacts with host capping enzyme RNGTT; this interaction stimulates RNGTT. Binds to host KDR, and to the host integrins ITGAV/ITGB3 and ITGA5/ITGB1. Interacts with host KPNB1/importin beta-1 without previous binding to KPNA1/importin alpha-1. Interacts with EIF2AK2. Interacts with host nucleosome assembly protein NAP1L1; this interaction may be required for the transport of Tat within the nucleus, since the two proteins interact at the nuclear rim. Interacts with host C1QBP/SF2P32; this interaction involves lysine-acetylated Tat. Interacts with the host chemokine receptors CCR2, CCR3 and CXCR4. Interacts with host DPP4/CD26; this interaction may trigger an anti-proliferative effect. Interacts with host LDLR. Interacts with the host extracellular matrix metalloproteinase MMP1. Interacts with host PRMT6; this interaction mediates Tat's methylation. Interacts with, and is ubiquitinated by MDM2/Hdm2. Interacts with host PSMC3 and HTATIP2. Interacts with STAB1; this interaction may overcome SATB1-mediated repression of IL2 and IL2RA (interleukin) in T cells by binding to the same domain than HDAC1. Interacts (when acetylated) with human CDK13, thereby increasing HIV-1 mRNA splicing and promoting the production of the doubly spliced HIV-1 protein Nef. Interacts with host TBP; this interaction modulates the activity of transcriptional pre-initiation complex. Interacts with host RELA. Post-translationally, asymmetrical arginine methylation by host PRMT6 seems to diminish the transactivation capacity of Tat and affects the interaction with host CCNT1. Polyubiquitination by host MDM2 does not target Tat to degradation, but activates its transactivation function and fosters interaction with CCNT1 and TAR RNA. In terms of processing, phosphorylated by EIF2AK2 on serine and threonine residues adjacent to the basic region important for TAR RNA binding and function. Phosphorylation of Tat by EIF2AK2 is dependent on the prior activation of EIF2AK2 by dsRNA.

The protein localises to the host nucleus. Its subcellular location is the host nucleolus. The protein resides in the host cytoplasm. It is found in the secreted. Its function is as follows. Transcriptional activator that increases RNA Pol II processivity, thereby increasing the level of full-length viral transcripts. Recognizes a hairpin structure at the 5'-LTR of the nascent viral mRNAs referred to as the transactivation responsive RNA element (TAR) and recruits the cyclin T1-CDK9 complex (P-TEFb complex) that will in turn hyperphosphorylate the RNA polymerase II to allow efficient elongation. The CDK9 component of P-TEFb and other Tat-activated kinases hyperphosphorylate the C-terminus of RNA Pol II that becomes stabilized and much more processive. Other factors such as HTATSF1/Tat-SF1, SUPT5H/SPT5, and HTATIP2 are also important for Tat's function. Besides its effect on RNA Pol II processivity, Tat induces chromatin remodeling of proviral genes by recruiting the histone acetyltransferases (HATs) CREBBP, EP300 and PCAF to the chromatin. This also contributes to the increase in proviral transcription rate, especially when the provirus integrates in transcriptionally silent region of the host genome. To ensure maximal activation of the LTR, Tat mediates nuclear translocation of NF-kappa-B by interacting with host RELA. Through its interaction with host TBP, Tat may also modulate transcription initiation. Tat can reactivate a latently infected cell by penetrating in it and transactivating its LTR promoter. In the cytoplasm, Tat is thought to act as a translational activator of HIV-1 mRNAs. Functionally, extracellular circulating Tat can be endocytosed by surrounding uninfected cells via the binding to several surface receptors such as CD26, CXCR4, heparan sulfate proteoglycans (HSPG) or LDLR. Neurons are rarely infected, but they internalize Tat via their LDLR. Through its interaction with nuclear HATs, Tat is potentially able to control the acetylation-dependent cellular gene expression. Modulates the expression of many cellular genes involved in cell survival, proliferation or in coding for cytokines or cytokine receptors. Tat plays a role in T-cell and neurons apoptosis. Tat induced neurotoxicity and apoptosis probably contribute to neuroAIDS. Circulating Tat also acts as a chemokine-like and/or growth factor-like molecule that binds to specific receptors on the surface of the cells, affecting many cellular pathways. In the vascular system, Tat binds to ITGAV/ITGB3 and ITGA5/ITGB1 integrins dimers at the surface of endothelial cells and competes with bFGF for heparin-binding sites, leading to an excess of soluble bFGF. The chain is Protein Tat from Pan troglodytes (Chimpanzee).